Here is a 492-residue protein sequence, read N- to C-terminus: Catalase isozyme 2 (492 aa).

Catalysis depends on residues histidine 65 and asparagine 138. Tyrosine 348 provides a ligand contact to heme.

Belongs to the catalase family. In terms of assembly, homotetramer. The cofactor is heme.

It localises to the peroxisome. The catalysed reaction is 2 H2O2 = O2 + 2 H2O. Its function is as follows. Occurs in almost all aerobically respiring organisms and serves to protect cells from the toxic effects of hydrogen peroxide. The protein is Catalase isozyme 2 (CAT2) of Gossypium hirsutum (Upland cotton).